The sequence spans 288 residues: Fatty acid-binding protein TM_1468 (288 aa).

One can recognise a DegV domain in the interval Val-3–Val-283. Hexadecanoate contacts are provided by Thr-63 and Ser-96.

As to quaternary structure, monomer.

Functionally, binds long-chain fatty acids, such as palmitate, and may play a role in lipid transport or fatty acid metabolism. The polypeptide is Fatty acid-binding protein TM_1468 (Thermotoga maritima (strain ATCC 43589 / DSM 3109 / JCM 10099 / NBRC 100826 / MSB8)).